The chain runs to 878 residues: Vacuolar membrane protease (878 aa).

Over 1–16 (MASLRLPRANPLAFTR) the chain is Cytoplasmic. A helical membrane pass occupies residues 17 to 37 (WPVTVITAIVYLALLIPLLVV). Topologically, residues 38–390 (HHVVPSAPSS…STFVLFQLHT (353 aa)) are vacuolar. Residues Asn-53 and Asn-119 are each glycosylated (N-linked (GlcNAc...) asparagine). His-174 and Asp-186 together coordinate Zn(2+). Glu-220 (proton acceptor) is an active-site residue. Glu-221, Glu-246, and His-319 together coordinate Zn(2+). A helical transmembrane segment spans residues 391-411 (LFALLVTLLIVGPLTLLFTSI). Residues 412 to 442 (ALTKADKMYLFRSSAKSEDRLDVVPLQGLRG) are Cytoplasmic-facing. The helical transmembrane segment at 443-463 (FFRFPFLFGIPTVVTVGLAYL) threads the bilayer. Topologically, residues 464-473 (VTKVNPYIIH) are vacuolar. The helical transmembrane segment at 474-494 (SSAYAVWSMMVAAWVFLAWFV) threads the bilayer. Residues 495-508 (SRVADFARPSAFHR) lie on the Cytoplasmic side of the membrane. A helical transmembrane segment spans residues 509-529 (IYTLTWMYVLSWVSAVIATVY). At 530-533 (ANQR) the chain is on the vacuolar side. A helical transmembrane segment spans residues 534–554 (GLAGGYFIFFFHAGIFLATWI). The Cytoplasmic segment spans residues 555–659 (SYLELFALPS…ALPKWTWGLQ (105 aa)). Residues 577–590 (GRASGHGSRRGTTS) are compositionally biased toward low complexity. A disordered region spans residues 577–611 (GRASGHGSRRGTTSGEDDGEEAEEEPTESTSLLGS). Over residues 591-603 (GEDDGEEAEEEPT) the composition is skewed to acidic residues. Residues 660 to 680 (LLLTAPITLIMVGPLALLTIS) form a helical membrane-spanning segment. Topologically, residues 681-693 (AISQTGQDGGHPL) are vacuolar. A helical transmembrane segment spans residues 694-714 (FAYVAIAIFTTIMLTPLLPFI). Residues 715 to 721 (HRYTYHV) lie on the Cytoplasmic side of the membrane. A helical transmembrane segment spans residues 722 to 742 (PLFLLAVFLGTLIYNLVAFPF). Residues 743–878 (SDSNRLKLYY…RRAFEIGNDD (136 aa)) are Vacuolar-facing.

It belongs to the peptidase M28 family. Requires Zn(2+) as cofactor.

It localises to the vacuole membrane. May be involved in vacuolar sorting and osmoregulation. The protein is Vacuolar membrane protease of Aspergillus flavus (strain ATCC 200026 / FGSC A1120 / IAM 13836 / NRRL 3357 / JCM 12722 / SRRC 167).